The chain runs to 291 residues: Bifunctional protein FolD (291 aa).

NADP(+) is bound by residues 168 to 170 (GRG), threonine 195, and valine 236.

The protein belongs to the tetrahydrofolate dehydrogenase/cyclohydrolase family. As to quaternary structure, homodimer.

It catalyses the reaction (6R)-5,10-methylene-5,6,7,8-tetrahydrofolate + NADP(+) = (6R)-5,10-methenyltetrahydrofolate + NADPH. The catalysed reaction is (6R)-5,10-methenyltetrahydrofolate + H2O = (6R)-10-formyltetrahydrofolate + H(+). Its pathway is one-carbon metabolism; tetrahydrofolate interconversion. Catalyzes the oxidation of 5,10-methylenetetrahydrofolate to 5,10-methenyltetrahydrofolate and then the hydrolysis of 5,10-methenyltetrahydrofolate to 10-formyltetrahydrofolate. This Bifidobacterium longum (strain DJO10A) protein is Bifunctional protein FolD.